The sequence spans 456 residues: Serine/threonine-protein kinase meng-po (456 aa).

The segment at 15–78 is disordered; the sequence is RSFGDGGSTN…RSSIYKKPDK (64 aa). The span at 22–55 shows a compositional bias: low complexity; the sequence is STNSRNSNNNSSTCTNHNNQKRCSTPLTPTSTST. In terms of domain architecture, Protein kinase spans 101 to 367; sequence YNIEKTLAEG…VAKYMKDRWV (267 aa). ATP is bound by residues 107 to 115 and Lys-130; that span reads LAEGCFAKI. Asp-221 functions as the Proton acceptor in the catalytic mechanism. Phosphoserine; by PKA is present on Ser-334.

This sequence belongs to the protein kinase superfamily. Ser/Thr protein kinase family. Requires Mg(2+) as cofactor. In terms of tissue distribution, expressed in the mushroom bodies (at protein level).

It catalyses the reaction L-seryl-[protein] + ATP = O-phospho-L-seryl-[protein] + ADP + H(+). The enzyme catalyses L-threonyl-[protein] + ATP = O-phospho-L-threonyl-[protein] + ADP + H(+). Activated by Pka-C1-mediated phosphorylation of Ser-334. Serine/threonine-protein kinase involved in memory formation. Together with the cAMP-dependent protein kinase A Pka-C1, promotes long-term memory (LTM) by regulating CrebB stability and activity. Involved in the maintenance of anesthesia-sensitive memory (ASM) which includes short-term memory (STM) and middle-term memory (MTM). The chain is Serine/threonine-protein kinase meng-po from Drosophila melanogaster (Fruit fly).